A 70-amino-acid polypeptide reads, in one-letter code: Protein FlmC homolog (70 aa).

The interval 1 to 21 (MSSPHQDSLLPRFAQGEEGHE) is disordered.

The chain is Protein FlmC homolog from Escherichia coli.